An 832-amino-acid polypeptide reads, in one-letter code: G-type lectin S-receptor-like serine/threonine-protein kinase RLK1 (832 aa).

An N-terminal signal peptide occupies residues 1–24; that stretch reads MGSLSCSIIHLVLILQLQTFFVFS. At 25–461 the chain is on the extracellular side; the sequence is QNIRNGSVPV…VPVTGNRAKK (437 aa). Residues Asn-29, Asn-92, Asn-100, Asn-178, Asn-240, and Asn-251 are each glycosylated (N-linked (GlcNAc...) asparagine). One can recognise a Bulb-type lectin domain in the interval 37–157; that stretch reads SLTASESQQI…GSEDSDEVLW (121 aa). The 51-residue stretch at 299 to 349 folds into the EGF-like; atypical domain; it reads RDNMCSPDDALGNMACGYNNICSLGNNKRPKCECPERFVLKDPSNEYGDCL. 3 disulfides stabilise this stretch: Cys-303–Cys-320, Cys-314–Cys-330, and Cys-332–Cys-348. The PAN domain occupies 357–446; it reads CRPENQTANS…DSDTFIKVRN (90 aa). A glycan (N-linked (GlcNAc...) asparagine) is linked at Asn-361. 2 disulfides stabilise this stretch: Cys-397–Cys-420 and Cys-401–Cys-407. Residue Asn-446 is glycosylated (N-linked (GlcNAc...) asparagine). Residues 462–482 traverse the membrane as a helical segment; it reads LDWLIIACSVLLGTSAFVIFD. Topologically, residues 483–832 are cytoplasmic; the sequence is TSCSYRKTKK…SLSSDPVSLV (350 aa). Positions 531 to 803 constitute a Protein kinase domain; it reads RDFTEELGRG…NVTQMLEGVI (273 aa). Residues 537 to 545 and Lys-563 each bind ATP; that span reads LGRGAFGIV. A caM-binding region spans residues 622–638; sequence RRPRPSWEDRKNIAVAI. Asp-657 (proton acceptor) is an active-site residue.

The protein belongs to the protein kinase superfamily. Ser/Thr protein kinase family.

It localises to the cell membrane. It carries out the reaction L-seryl-[protein] + ATP = O-phospho-L-seryl-[protein] + ADP + H(+). The enzyme catalyses L-threonyl-[protein] + ATP = O-phospho-L-threonyl-[protein] + ADP + H(+). The polypeptide is G-type lectin S-receptor-like serine/threonine-protein kinase RLK1 (RLK1) (Arabidopsis thaliana (Mouse-ear cress)).